The following is a 260-amino-acid chain: Ribose-5-phosphate isomerase A (260 aa).

Residues 33–36, 89–92, and 102–105 each bind substrate; these read TGST, DGAD, and KGGG. Glutamate 111 functions as the Proton acceptor in the catalytic mechanism. A substrate-binding site is contributed by lysine 129.

Belongs to the ribose 5-phosphate isomerase family. Homodimer.

It catalyses the reaction aldehydo-D-ribose 5-phosphate = D-ribulose 5-phosphate. Its pathway is carbohydrate degradation; pentose phosphate pathway; D-ribose 5-phosphate from D-ribulose 5-phosphate (non-oxidative stage): step 1/1. Catalyzes the reversible conversion of ribose-5-phosphate to ribulose 5-phosphate. This Dinoroseobacter shibae (strain DSM 16493 / NCIMB 14021 / DFL 12) protein is Ribose-5-phosphate isomerase A.